Reading from the N-terminus, the 217-residue chain is Small ribosomal subunit protein uS3 (217 aa).

The KH type-2 domain maps to 40–110 (IRDLINNSFN…EVYINIHEVR (71 aa)).

This sequence belongs to the universal ribosomal protein uS3 family. Part of the 30S ribosomal subunit. Forms a tight complex with proteins S10 and S14.

In terms of biological role, binds the lower part of the 30S subunit head. Binds mRNA in the 70S ribosome, positioning it for translation. The polypeptide is Small ribosomal subunit protein uS3 (Rickettsia canadensis (strain McKiel)).